A 259-amino-acid chain; its full sequence is Global transcriptional regulator CodY (259 aa).

A GAF domain region spans residues 1–155 (MDLLSKTRRI…GATVVGMEIL (155 aa)). Residues 203 to 222 (ASKIADRVGITRSVIVNALR) constitute a DNA-binding region (H-T-H motif).

The protein belongs to the CodY family.

Its subcellular location is the cytoplasm. Functionally, DNA-binding global transcriptional regulator which is involved in the adaptive response to starvation and acts by directly or indirectly controlling the expression of numerous genes in response to nutrient availability. During rapid exponential growth, CodY is highly active and represses genes whose products allow adaptation to nutrient depletion. This Brevibacillus brevis (strain 47 / JCM 6285 / NBRC 100599) protein is Global transcriptional regulator CodY.